Here is a 143-residue protein sequence, read N- to C-terminus: Small ribosomal subunit protein eS6 (143 aa).

This sequence belongs to the eukaryotic ribosomal protein eS6 family.

The sequence is that of Small ribosomal subunit protein eS6 from Methanoregula boonei (strain DSM 21154 / JCM 14090 / 6A8).